Consider the following 100-residue polypeptide: NAD(P)H-quinone oxidoreductase subunit 4L, chloroplastic (100 aa).

Transmembrane regions (helical) follow at residues 1–21, 31–51, and 60–80; these read MLEH…YGLI, MCLE…SDFF, and IFSI…PAIL.

It belongs to the complex I subunit 4L family. NDH is composed of at least 16 different subunits, 5 of which are encoded in the nucleus.

The protein localises to the plastid. Its subcellular location is the chloroplast thylakoid membrane. The enzyme catalyses a plastoquinone + NADH + (n+1) H(+)(in) = a plastoquinol + NAD(+) + n H(+)(out). It catalyses the reaction a plastoquinone + NADPH + (n+1) H(+)(in) = a plastoquinol + NADP(+) + n H(+)(out). Functionally, NDH shuttles electrons from NAD(P)H:plastoquinone, via FMN and iron-sulfur (Fe-S) centers, to quinones in the photosynthetic chain and possibly in a chloroplast respiratory chain. The immediate electron acceptor for the enzyme in this species is believed to be plastoquinone. Couples the redox reaction to proton translocation, and thus conserves the redox energy in a proton gradient. This chain is NAD(P)H-quinone oxidoreductase subunit 4L, chloroplastic, found in Cucumis sativus (Cucumber).